We begin with the raw amino-acid sequence, 584 residues long: MTRIKEFFTKLSESSTNQNISNIPKKKKKLFLALFATLLVVAAVIGIVAGVNSRKNSGDNGNEPHHAILKSSCSSTRYPDLCFSAIAAVPEASKKVTSQKDVIEMSLNITTTAVEHNYFGIQKLLKRTNLTKREKVALHDCLETIDETLDELHKAVEDLEEYPNKKSLSQHADDLKTLMSAAMTNQGTCLDGFSHDDANKHVRDALSDGQVHVEKMCSNALAMIKNMTDTDMMIMRTSNNRKLIEETSTVDGWPAWLSTGDRRLLQSSSVTPNVVVAADGSGNFKTVAASVAAAPQGGTKRYIIRIKAGVYRENVEVTKKHKNIMFIGDGRTRTIITGSRNVVDGSTTFKSATVAVVGEGFLARDITFQNTAGPSKHQAVALRVGADLSAFYNCDMLAYQDTLYVHSNRQFFVNCLIAGTVDFIFGNAAAVLQNCDIHARKPNSGQKNMVTAQGRADPNQNTGIVIQKSRIGATSDLKPVQGSFPTYLGRPWKEYSRTVIMQSSITDVIHPAGWHEWDGNFALNTLFYGEHQNAGAGAGTSGRVKWKGFRVITSATEAQAFTPGSFIAGSSWLGSTGFPFSLGL.

An N-terminal signal peptide occupies residues 1–50 (MTRIKEFFTKLSESSTNQNISNIPKKKKKLFLALFATLLVVAAVIGIVAG). A propeptide spanning residues 51-266 (VNSRKNSGDN…LSTGDRRLLQ (216 aa)) is cleaved from the precursor. N-linked (GlcNAc...) asparagine glycosylation is found at Asn-108, Asn-129, and Asn-226. Thr-348 and Gln-378 together coordinate substrate. The active-site Proton donor is Asp-401. Cysteines 415 and 435 form a disulfide. The active-site Nucleophile is the Asp-422. Substrate is bound by residues Arg-490 and Trp-492.

It in the N-terminal section; belongs to the PMEI family. In the C-terminal section; belongs to the pectinesterase family. In the peel, expression is localized to the region of the flavedo close to the oil glands, and to the innermost layer of the albedo. In the lamella, expression is localized to the cell layers opposing the fruit tissue, and to the parenchyma surrounding the vascular tissue. In the fruit vesicles, expression is restricted to the peripheral cell layers and stalk cells. High levels of expression are detected in the core matrix.

It localises to the secreted. It is found in the cell wall. The catalysed reaction is [(1-&gt;4)-alpha-D-galacturonosyl methyl ester](n) + n H2O = [(1-&gt;4)-alpha-D-galacturonosyl](n) + n methanol + n H(+). It participates in glycan metabolism; pectin degradation; 2-dehydro-3-deoxy-D-gluconate from pectin: step 1/5. In terms of biological role, acts in the modification of cell walls via demethylesterification of cell wall pectin. This chain is Pectinesterase 3, found in Citrus sinensis (Sweet orange).